The sequence spans 505 residues: Tyrosine-protein kinase Blk (505 aa).

The tract at residues M1–P37 is disordered. A lipid anchor (N-myristoyl glycine) is attached at G2. Residues K7 to G21 are compositionally biased toward basic and acidic residues. Residues E58–S118 form the SH3 domain. In terms of domain architecture, SH2 spans W124 to C220. In terms of domain architecture, Protein kinase spans L241–Y494. ATP-binding positions include L247–V255 and K269. Catalysis depends on D360, which acts as the Proton acceptor. Y389 is modified (phosphotyrosine; by autocatalysis).

This sequence belongs to the protein kinase superfamily. Tyr protein kinase family. SRC subfamily. In terms of assembly, interacts with CBL (via SH2 domain). Interacts with CD79A and CD79B (via SH2 domain). In terms of processing, phosphorylated on tyrosine residues after antibody-mediated surface engagement of the B-cell antigen receptor (BCR). Post-translationally, ubiquitination of activated BLK by the UBE3A ubiquitin protein ligase leads to its degradation by the ubiquitin-proteasome pathway. In terms of tissue distribution, expressed in lymphatic organs, pancreatic islets, Leydig cells, striate ducts of salivary glands and hair follicles.

Its subcellular location is the cell membrane. The catalysed reaction is L-tyrosyl-[protein] + ATP = O-phospho-L-tyrosyl-[protein] + ADP + H(+). Its activity is regulated as follows. Antibody-mediated surface engagement of the B-cell antigen receptor (BCR) which results in the phosphorylation of BLK on tyrosine residues, stimulates the enzymatic activity. Functionally, non-receptor tyrosine kinase involved in B-lymphocyte development, differentiation and signaling. B-cell receptor (BCR) signaling requires a tight regulation of several protein tyrosine kinases and phosphatases, and associated coreceptors. Binding of antigen to the B-cell antigen receptor (BCR) triggers signaling that ultimately leads to B-cell activation. Signaling through BLK plays an important role in transmitting signals through surface immunoglobulins and supports the pro-B to pre-B transition, as well as the signaling for growth arrest and apoptosis downstream of B-cell receptor. Specifically binds and phosphorylates CD79A at 'Tyr-188'and 'Tyr-199', as well as CD79B at 'Tyr-196' and 'Tyr-207'. Also phosphorylates the immunoglobulin G receptors FCGR2A, FCGR2B and FCGR2C. With FYN and LYN, plays an essential role in pre-B-cell receptor (pre-BCR)-mediated NF-kappa-B activation. Also contributes to BTK activation by indirectly stimulating BTK intramolecular autophosphorylation. In pancreatic islets, acts as a modulator of beta-cells function through the up-regulation of PDX1 and NKX6-1 and consequent stimulation of insulin secretion in response to glucose. Phosphorylates CGAS, promoting retention of CGAS in the cytosol. The polypeptide is Tyrosine-protein kinase Blk (BLK) (Homo sapiens (Human)).